The primary structure comprises 319 residues: Acetyl esterase (319 aa).

Residues 91–93 carry the Involved in the stabilization of the negatively charged intermediate by the formation of the oxyanion hole motif; the sequence is HGG. Catalysis depends on residues S165, D262, and H292.

This sequence belongs to the 'GDXG' lipolytic enzyme family. Homodimer. Interacts with MalT and MelA.

Its subcellular location is the cytoplasm. Its function is as follows. Displays esterase activity towards short chain fatty esters (acyl chain length of up to 8 carbons). Able to hydrolyze triacetylglycerol (triacetin) and tributyrylglycerol (tributyrin), but not trioleylglycerol (triolein) or cholesterol oleate. Negatively regulates MalT activity by antagonizing maltotriose binding. Inhibits MelA galactosidase activity. The protein is Acetyl esterase of Escherichia coli O139:H28 (strain E24377A / ETEC).